The following is a 505-amino-acid chain: Glutamate--tRNA ligase (505 aa).

The 'HIGH' region motif lies at 11–21 (PSPTGPLHIGG). The 'KMSKS' region signature appears at 260–264 (KLSKR). Lysine 263 provides a ligand contact to ATP.

This sequence belongs to the class-I aminoacyl-tRNA synthetase family. Glutamate--tRNA ligase type 1 subfamily. As to quaternary structure, monomer.

It is found in the cytoplasm. The enzyme catalyses tRNA(Glu) + L-glutamate + ATP = L-glutamyl-tRNA(Glu) + AMP + diphosphate. Catalyzes the attachment of glutamate to tRNA(Glu) in a two-step reaction: glutamate is first activated by ATP to form Glu-AMP and then transferred to the acceptor end of tRNA(Glu). This Christiangramia forsetii (strain DSM 17595 / CGMCC 1.15422 / KT0803) (Gramella forsetii) protein is Glutamate--tRNA ligase.